The primary structure comprises 287 residues: Undecaprenyl-diphosphatase (287 aa).

The next 7 membrane-spanning stretches (helical) occupy residues 6–26 (LHLLKAFFLGIVEGLTEFIPV), 45–65 (SGKVFEVVIQFGSILAVMWIF), 89–109 (NLLLAFLPAAVIGAIFIKSIK), 111–131 (VFYHPGVVAVTLVVGGFIMLW), 204–224 (ATEFSFFLAMPTMLGAAVYDL), 238–258 (AIAVGFVAAFLSALVVVRAVL), and 266–286 (YRVFAWYRIALGLVVAAWIYA).

This sequence belongs to the UppP family.

It is found in the cell inner membrane. The catalysed reaction is di-trans,octa-cis-undecaprenyl diphosphate + H2O = di-trans,octa-cis-undecaprenyl phosphate + phosphate + H(+). Functionally, catalyzes the dephosphorylation of undecaprenyl diphosphate (UPP). Confers resistance to bacitracin. This chain is Undecaprenyl-diphosphatase, found in Bordetella pertussis (strain Tohama I / ATCC BAA-589 / NCTC 13251).